Here is a 247-residue protein sequence, read N- to C-terminus: Transcription factor bHLH92 (247 aa).

Residues 85 to 134 form the bHLH domain; sequence ERSRRHMLKERTRREKQKQSYLALHSLLPFATKNDKNSIVEKAVDEIAKL.

Homodimer.

Its subcellular location is the nucleus. The chain is Transcription factor bHLH92 (BHLH92) from Arabidopsis thaliana (Mouse-ear cress).